Consider the following 296-residue polypeptide: Cytidine deaminase (296 aa).

2 CMP/dCMP-type deaminase domains span residues 48–168 and 187–296; these read DADA…FGPV and QNMN…FIEE. 89–91 serves as a coordination point for substrate; it reads NME. His-102 is a binding site for Zn(2+). Glu-104 acts as the Proton donor in catalysis. 2 residues coordinate Zn(2+): Cys-129 and Cys-132.

The protein belongs to the cytidine and deoxycytidylate deaminase family. As to quaternary structure, homodimer. Zn(2+) is required as a cofactor.

The catalysed reaction is cytidine + H2O + H(+) = uridine + NH4(+). The enzyme catalyses 2'-deoxycytidine + H2O + H(+) = 2'-deoxyuridine + NH4(+). This enzyme scavenges exogenous and endogenous cytidine and 2'-deoxycytidine for UMP synthesis. In Pectobacterium carotovorum subsp. carotovorum (strain PC1), this protein is Cytidine deaminase.